A 611-amino-acid chain; its full sequence is Probable Xaa-Pro aminopeptidase P (611 aa).

Asp408, Asp419, Glu517, and Glu531 together coordinate Mn(2+).

It belongs to the peptidase M24B family. The cofactor is Mn(2+).

The enzyme catalyses Release of any N-terminal amino acid, including proline, that is linked to proline, even from a dipeptide or tripeptide.. In terms of biological role, catalyzes the removal of a penultimate prolyl residue from the N-termini of peptides. The polypeptide is Probable Xaa-Pro aminopeptidase P (AMPP) (Coccidioides posadasii (strain RMSCC 757 / Silveira) (Valley fever fungus)).